The chain runs to 194 residues: Phosphoheptose isomerase (194 aa).

Positions 31–186 constitute an SIS domain; it reads ICQRFQAGNK…CEQVESRLFA (156 aa). 46 to 48 provides a ligand contact to substrate; that stretch reads NGG. Positions 55 and 59 each coordinate Zn(2+). Substrate contacts are provided by residues Glu-59, 88-89, 114-116, Ser-119, and Gln-166; these read ND and STS. Residues Gln-166 and His-174 each coordinate Zn(2+).

Belongs to the SIS family. GmhA subfamily. Zn(2+) is required as a cofactor.

Its subcellular location is the cytoplasm. It carries out the reaction 2 D-sedoheptulose 7-phosphate = D-glycero-alpha-D-manno-heptose 7-phosphate + D-glycero-beta-D-manno-heptose 7-phosphate. It participates in carbohydrate biosynthesis; D-glycero-D-manno-heptose 7-phosphate biosynthesis; D-glycero-alpha-D-manno-heptose 7-phosphate and D-glycero-beta-D-manno-heptose 7-phosphate from sedoheptulose 7-phosphate: step 1/1. Its function is as follows. Catalyzes the isomerization of sedoheptulose 7-phosphate in D-glycero-D-manno-heptose 7-phosphate. This is Phosphoheptose isomerase from Synechocystis sp. (strain ATCC 27184 / PCC 6803 / Kazusa).